The following is a 155-amino-acid chain: MAKGEGKVVAQNKKARHDYTIVDTLEAGMVLTGTEIKSVRAARINLKDGFAQVKNGEVWLSNVHIAPYEEGNIWNQEPERRRKLLLHKKQIQKLEQEIKGTGMTLVPLKVYIKDGYAKLLLGLAKGKHDYDKRESIKRREQNRDIARVMKAVNQR.

Belongs to the SmpB family.

The protein resides in the cytoplasm. Functionally, required for rescue of stalled ribosomes mediated by trans-translation. Binds to transfer-messenger RNA (tmRNA), required for stable association of tmRNA with ribosomes. tmRNA and SmpB together mimic tRNA shape, replacing the anticodon stem-loop with SmpB. tmRNA is encoded by the ssrA gene; the 2 termini fold to resemble tRNA(Ala) and it encodes a 'tag peptide', a short internal open reading frame. During trans-translation Ala-aminoacylated tmRNA acts like a tRNA, entering the A-site of stalled ribosomes, displacing the stalled mRNA. The ribosome then switches to translate the ORF on the tmRNA; the nascent peptide is terminated with the 'tag peptide' encoded by the tmRNA and targeted for degradation. The ribosome is freed to recommence translation, which seems to be the essential function of trans-translation. This chain is SsrA-binding protein, found in Streptococcus pneumoniae serotype 4 (strain ATCC BAA-334 / TIGR4).